The primary structure comprises 103 residues: Large ribosomal subunit protein bL21 (103 aa).

The protein belongs to the bacterial ribosomal protein bL21 family. In terms of assembly, part of the 50S ribosomal subunit. Contacts protein L20.

This protein binds to 23S rRNA in the presence of protein L20. This chain is Large ribosomal subunit protein bL21, found in Aliivibrio salmonicida (strain LFI1238) (Vibrio salmonicida (strain LFI1238)).